A 505-amino-acid chain; its full sequence is Deoxyguanosinetriphosphate triphosphohydrolase (505 aa).

One can recognise an HD domain in the interval 66-273 (RLTHSMEVQQ…MEAADDISYC (208 aa)).

Belongs to the dGTPase family. Type 1 subfamily. In terms of assembly, homotetramer. Mg(2+) serves as cofactor.

It catalyses the reaction dGTP + H2O = 2'-deoxyguanosine + triphosphate + H(+). Its function is as follows. dGTPase preferentially hydrolyzes dGTP over the other canonical NTPs. This Escherichia fergusonii (strain ATCC 35469 / DSM 13698 / CCUG 18766 / IAM 14443 / JCM 21226 / LMG 7866 / NBRC 102419 / NCTC 12128 / CDC 0568-73) protein is Deoxyguanosinetriphosphate triphosphohydrolase.